Here is a 78-residue protein sequence, read N- to C-terminus: Large ribosomal subunit protein bL28 (78 aa).

The protein belongs to the bacterial ribosomal protein bL28 family.

The chain is Large ribosomal subunit protein bL28 from Flavobacterium johnsoniae (strain ATCC 17061 / DSM 2064 / JCM 8514 / BCRC 14874 / CCUG 350202 / NBRC 14942 / NCIMB 11054 / UW101) (Cytophaga johnsonae).